The chain runs to 457 residues: Multidrug resistance protein MdtK (457 aa).

The next 12 helical transmembrane spans lie at 11 to 31 (LLAL…MGFV), 53 to 73 (IWLP…PVIA), 93 to 113 (WLAG…GYII), 127 to 147 (AVGY…FQVA), 160 to 180 (GMVM…IFIY), 188 to 208 (LGGI…FIAM), 243 to 263 (LPIA…ALLV), 276 to 296 (IALN…AAVT), 314 to 334 (AART…IFTV), 350 to 370 (VVAL…SDSI), 387 to 407 (IFFI…YILA), and 418 to 438 (PAGF…LMML).

This sequence belongs to the multi antimicrobial extrusion (MATE) (TC 2.A.66.1) family. MdtK subfamily.

The protein resides in the cell inner membrane. Functionally, multidrug efflux pump that functions probably as a Na(+)/drug antiporter. The chain is Multidrug resistance protein MdtK from Salmonella heidelberg (strain SL476).